Here is a 499-residue protein sequence, read N- to C-terminus: Lysine--tRNA ligase (499 aa).

Residues Glu407 and Glu414 each contribute to the Mg(2+) site.

It belongs to the class-II aminoacyl-tRNA synthetase family. In terms of assembly, homodimer. Mg(2+) serves as cofactor.

The protein resides in the cytoplasm. It carries out the reaction tRNA(Lys) + L-lysine + ATP = L-lysyl-tRNA(Lys) + AMP + diphosphate. This Lactiplantibacillus plantarum (strain ATCC BAA-793 / NCIMB 8826 / WCFS1) (Lactobacillus plantarum) protein is Lysine--tRNA ligase.